A 187-amino-acid chain; its full sequence is uncharacterized protein (187 aa).

In terms of domain architecture, HTH tetR-type spans 6–66; that stretch reads TDLAEQIFSA…QFAHRVFSMF (61 aa). Positions 29 to 48 form a DNA-binding region, H-T-H motif; that stretch reads SMLKLAKEANVAAGTIYLYF.

This is an uncharacterized protein from Haemophilus influenzae (strain ATCC 51907 / DSM 11121 / KW20 / Rd).